The following is a 9439-amino-acid chain: MSGTLHNTVGSGILPYQQEIRIKLTSNEPIKDSEWSITGYPNTLTLQNAVGRTNNATEKNLALVGHIDPGNYFITVKFGDKVEQFEIRSKPTPPRIITTANELRGNSNHKPEIRVTDIPNDTTAKIKLVMGGTDGDHDPEINPYTVPENYTVVAEAYHDNDPSKNGVLTFRSSDYLKDLPLSGELKAIVYYNQYVQSNFSNSVPFSSDTTPPTINEPAGLVHKYYRGDHVEITLPVTDNTGGSGLRDVNVNLPQGWTKTFTINPNNNTEGTLKLIGNIPSNEAYNTTYHFNITATDNSGNTTNPAKTFILNVGKLADDLNPVGLSRDQLQLVTDPSSLSNSEREEVKRKISEANANIRSYLLQNNPILAGVNGDVTFYYRDGSVDVIDAENVITYEPERKSIFSENGNTNKKEAVITIARGQNYTIGPNLRKYFSLSNGSDLPNRDFTSISAIGSLPSSSEISRLNVGNYNYRVNAKNAYHKTQQELNLKLKIVEVNAPTGNNRVYRVSTYNLTNDEINKIKQAFKAANSGLNLNDNDITVSNNFDHRNVSSVTVTIRKGDLIKEFSSNLNNMNFLRWVNIRDDYTISWTSSKIQGRNTDGGLEWSPDHKSLIYKYDATLGRQINTNDVLTLLQATAKNSNLRSNINSNEKQLAERGSNGYSKSIIRDDGEKSYLLNSNPIQVLDLVEPDNGYGGRQVSHSNVIYNEKNSSIVNGQVPEANGASAFNIDKVVKANAANNGIMGVIYKAQLYLAPYSPKGYIEKLGQNLSNTNNVINVYFVPSDKVNPSITVGNYDHHTVYSGETFKNTINVNDNYGLNTVASTSDSAITMTRNNNELVGQAPNVTNSTNKIVKVKATDKSGNESIVSFTVNIKPLNEKYRITTSSSNQTPVRISNIQNNANLSIEDQNRVKSSLSMTKILGTRNYVNESNNDVRSQVVSKVNRSGNNATVNVTTTFSDGTTNTITVPVKHVLLEVVPTTRTTVRGQQFPTGKGTSPNDFFSLRTGGPVDARIVWVNNQGPDINSNQIGRDLTLHAEIFFDGETTPIRKDTTYKLSQSIPKQIYETTINGRFNSSGDAYPGNFVQAVNQYWPEHMDFRWAQGSGTPSSRNAGSFTKTVTVVYQNGQTENVNVLFKVKPNKPVIDSNSVISKGQLNGQQILVRNVPQNAQVTLYQSNGTVIPNTNTTIDSNGIATVTIQGTLPTGNITAKTSMTNNVTYTKQNSSGIASNTTEDISVFSENSDQVNVTAGMQAKNDGIKIIKGTNYNFNDFNSFISNIPAHSTLTWNEEPNSWKNNIGTTTKTVTVTLPNHQGTRTVDIPITIYPTVTAKNPVRDQKGRNLTNGTDVYNYIIFENNNRLGGTASWKDNRQPDKNIAGVQNLIALVNYPGISTPLEVPVKVWVYNFDFTQPIYKIQVGDTFPKGTWAGYYKHLENGEGLPIDGWKFYWNQQSTGTTSDQWQSLAYTRTPFVKTGTYDVVNPSNWGVWQTSQSAKFIVTNAKPNQPTITQSKTGDVTVTPGAVRNILISGTNDYIQASADKIVINKNGNKLTTFVKNNDGRWTVETGSPDINGIGPTNNGTAISLSRLAVRPGDSIEAIATEGSGETISTSATSEIYIVKAPQPEQVATHTYDNGTFDILPDNSRNSLNPTERVEINYTEKLNGNETQKSFTITKNNNGKWTINNKPNYVEFNQDNGKVVFSANTIKPNSQITITPKAGQGNTENTNPTVIQAPAQHTLTINEIVKEQGQNVTNDDINNAVQVPNKNRVAIKQGNALPTNLAGGSTSHIPVVIYYSDGSSEEATETVRTKVNKTELINARRRLDEEISKENKTPSSIRNFDQAMNRAQSQINTAKSDADQVIGTEFATPQQVNSALSKVQAAQNKINEAKALLQNKADNSQLVRAKEQLQQSIQPAASTDGMTQDSTRNYKNKRQAAEQAIQHANSVINNGDATSQQINDAKNTVEQAQRDYVEAKSNLRADKSQLQSAYDTLNRDVLTNDKKPASVRRYNEAISNIRKELDTAKADASSTLRNTNPSVEQVRDALNKINTVQPKVNQAIALLQPKENNSELVQAKKRLQDAVNDIPQTQGMTQQTINNYNDKQREAERALTSAQRVIDNGDATTQEITSEKSKVEQAMQALTNAKSNLRADKNELQTAYNKLIENVSTNGKKPASIRQYETAKARIQNQINDAKNEAERILGNDNPQVSQVTQALNKIKAIQPKLTEAINMLQNKENNTELVNAKNRLENAVNDTDPTHGMTQETINNYNAKKREAQNEIQKANMIINNGDATAQDISSEKSKVEQVLQALQNAKNDLRADKRELQTAYNKLIQNVNTNGKKPSSIQNYKSARRNIENQYNTAKNEAHNVLENTNPTVNAVEDALRKINAIQPEVTKAINILQDKEDNSELVRAKEKLDQAINSQPSLNGMTQESINNYTTKRREAQNIASSADTIINNGDASIEQITENKIRVEEATNALNEAKQHLTADTTSLKTEVRKLSRRGDTNNKKPSSVSAYNNTIHSLQSEITQTENRANTIINKPIRSVEEVNNALHEVNQLNQRLTDTINLLQPLANKESLKEARNRLESKINETVQTDGMTQQSVENYKQAKIKAQNESSIAQTLINNGDASDQEVSTEIEKLNQKLSELTNSINHLTVNKEPLETAKNQLQANIDQKPSTDGMTQQSVQSYERKLQEAKDKINSINNVLANNPDVNAIRTNKVETEQINNELTQAKQGLTVDKQPLINAKTALQQSLDNQPSTTGMTEATIQNYNAKRQKAEQVIQNANKIIENAQPSVQQVSDEKSKVEQALSELNNAKSALRADKQELQQAYNQLIQPTDLNNKKPASITAYNQRYQQFSNELNSTKTNTDRILKEQNPSVADVNNALNKVREVQQKLNEARALLQNKEDNSALVRAKEQLQQAVDQVPSTEGMTQQTKDDYNSKQQAAQQEISKAQQVIDNGDATTQQISNAKTNVERALEALNNAKTGLRADKEELQNAYNQLTQNIDTSGKTPASIRKYNEAKSRIQTQIDSAKNEANSILTNDNPQVSQVTAALNKIKAVQPELDKAIAMLKNKENNNALVQAKQQLQQIVNEVDPTQGMTTDTANNYKSKKREAEDEIQKAQQIINNGDATEQQITNETNRVNQAINAINKAKNDLRADKSQLENAYNQLIQNVDTNGKKPASIQQYQAARQAIETQYNNAKSEAHQILENSNPSVNEVAQALQKVEAVQLKVNDAIHILQNKENNSALVTAKNQLQQSVNDQPLTTGMTQDSINNYEAKRNEAQSAIRNAEAVINNGDATAKQISDEKSKVEQALAHLNDAKQQLTADTTELQTAVQQLNRRGDTNNKKPRSINAYNKAIQSLETQITSAKDNANAVIQKPIRTVQEVNNALQQVNQLNQQLTEAINQLQPLSNNDALKAARLNLENKINQTVQTDGMTQQSIEAYQNAKRVAQNESNTALALINNGDADEQQITTETDRVNQQTTNLTQAINGLTVNKEPLETAKTALQNNIDQVPSTDGMTQQSVANYNQKLQIAKNEINTINNVLANNPDVNAIKTNKAEAERISNDLTQAKNNLQVDTQPLEKIKRQLQDEIDQGTNTDGMTQDSVDNYNDSLSAAIIEKGKVNKLLKRNPTVEQVKESVANAQQVIQDLQNARTSLVPDKTQLQEAKNRLENSINQQTDTDGMTQDSLNNYNDKLAKARQNLEKISKVLGGQPTVAEIRQNTDEANAHKQALDTARSQLTLNREPYINHINNESHLNNAQKDNFKAQVNSAPNHNTLETIKNKADTLNQSMTALSESIADYENQKQQENYLDASNNKRQDYDNAVNAAKGILNQTQSPTMSADVIDQKAEDVKRTKTALDGNQRLEVAKQQALNHLNTLNDLNDAQRQTLTDTINHSPNINSVNQAKEKANTVNTAMTQLKQTIANYDDELHDGNYINADKDKKDAYNNAVNNAKQLINQSDANQAQLDPAEINKVTQRVNTTKNDLNGNDKLAEAKRDANTTIDGLTYLNEAQRNKAKENVGKASTKTNITSQLQDYNQLNIAMQALRNSVNDVNNVKANSNYINEDNGPKEAYNQAVTHAQTLINAQSNPEMSRDVVNQKTQAVNTAHQNLHGQQKLEQAQSSANTEIGNLPNLTNTQKAKEKELVNSKQTRTEVQEQLNQAKSLDSSMGTLKSLVAKQPTVQKTSVYINEDQPEQSAYNDSITMGQTIINKTADPVLDKTLVDNAISNISTKENALHGEQKLTTAKTEAINALNTLADLNTPQKEAIKTAINTAHTRTDVTAEQSKANQINSAMHTLRQNISDNESVTNESNYINAEPEKQHAFTEALNNAKEIVNEQQATLDANSINQKAQAILTTKNALDGEEQLRRAKENADQEINTLNQLTDAQRNSEKGLVNSSQTRTEVASQLAKAKELNKVMEQLNHLINGKNQMINSSKFINEDANQQQAYSNAIASAEALKNKSQNPELDKVTIEQAINNINSAINNLNGEAKLTKAKEDAVASINNLSGLTNEQKPKENQAVNGAQTRDQVANKLRDAEALDQSMQTLRDLVNNQNAIHSTSNYFNEDSTQKNTYDNAIDNGSTYITGQHNPELNKSTIDQTISRINTAKNDLHGVEKLQRDKGTANQEIGQLGYLNDPQKSGEESLVNGSNTRSEVEEHLNEAKSLNNAMKQLRDKVAEKTNVKQSSDYINDSTEHQRGYDQALQEAENIINEIGNPTLNKSEIEQKLQQLTDAQNALQGSHLLEEAKNNAITGINKLTALNDAQRQKAIENVQAQQTIPAVNQQLTLDREINTAMQALRDKVGQQNNVHQQSNYFNEDEQPKHNYDNSVQAGQTIIDKLQDPIMNKNEIEQAINQINTTQTALSGENKLHTDQESTNRQIEGLSSLNTAQINAEKDLVNQAKTRTDVAQKLAAAKEINSAMSNLRDGIQNKEDIKRSSAYINADPTKVTAYDQALQNAENIINATPNVELNKATIEQALSRVQQAQQDLDGVQQLANAKQQATQTVNGLNSLNDGQKRELNLLINSANTRTKVQEELNKATELNHAMEALRNSVQNVDQVKQSSNYVNEDQPEQHNYDNAVNEAQATINNNAQPVLDKLAIERLTQTVNTTKDALHGAQKLTQDQQAAETGIRGLTSLNEPQKNAEVAKVTAATTRDEVRNIRQEATTLDTAMLGLRKSIKDKNDTKNSSKYINEDHDQQQAYDNAVNNAQQVIDETQATLSSDTINQLANAVTQAKSNLHGDTKLQHDKDSAKQTIAQLQNLNSAQKHMEDSLIDNESTRTQVQHDLTEAQALDGLMGALKESIKDYTNIVSNGNYINAEPSKKQAYDAAVQNAQNIINGTNQPTINKGNVTTATQTVKNTKDALDGDHRLEEAKNNANQTIRNLSNLNNAQKDAEKNLVNSASTLEQVQQNLQTAQQLDNAMGELRQSIAKKDQVKADSKYLNEDPQIKQNYDDAVQRVETIINETQNPELLKANIDQATQSVQNAEQALHGAEKLNQDKQTSSTELDGLTDLTDAQREKLREQINTSNSRDDIKQKIEQAKALNDAMKKLKEQVAQKDGVHANSDYTNEDSAQKDAYNNALKQAEDIINNSSNPNLNAQDITNALNNIKQAQDNLHGAQKLQQDKNTTNQAIGNLNHLNQPQKDALIQAINGATSRDQVAEKLKEAEALDEAMKQLEDQVNQDDQISNSSPFINEDSDKQKTYNDKIQAAKEIINQTSNPTLDKQKIADTLQNIKDAVNNLHGDQKLAQSKQDANNQLNHLDDLTEEQKNHFKPLINNADTRDEVNKQLEIAKQLNGDMSTLHKVINDKDQIQHLSNYINADNDKKQNYDNAIKEAEDLIHNHPDTLDHKALQDLLNKIDQAHNELNGESRFKQALDNALNDIDSLNSLNVPQRQTVKDNINHVTTLESLAQELQKAKELNDAMKAMRDSIMNQEQIRKNSNYTNEDLAQQNAYNHAVDKINNIIGEDNATMDPQIIKQATQDINTAINGLNGDQKLQDAKTDAKQQITNFTGLTEPQKQALENIINQQTSRANVAKQLSHAKFLNGKMEELKVAVAKASLVRQNSNYINEDVSEKEAYEQAIAKGQEIINSENNPTISSTDINRTIQEINDAEQNLHGDNKLRQAQEIAKNEIQNLDGLNSAQITKLIQDIGRTTTKPAVTQKLEEAKAINQAMQQLKQSIADKDATLNSSNYLNEDSEKKLAYDNAVSQAEQLINQLNDPTMDISNIQAITQKVIQAKDSLHGANKLAQNQADSNLIINQSTNLNDKQKQALNDLINHAQTKQQVAEIIAQANKLNNEMGTLKTLVEEQSNVHQQSKYINEDPQVQNIYNDSIQKGREILNGTTDDVLNNNKIADAIQNIHLTKNDLHGDQKLQKAQQDATNELNYLTNLNNSQRQSEHDEINSAPSRTEVSNDLNHAKALNEAMRQLENEVALENSVKKLSDFINEDEAAQNEYSNALQKAKDIINGVPSSTLDKATIEDALLELQNARESLHGEQKLQEAKNQAVAEIDNLQALNPGQVLAEKTLVNQASTKPEVQEALQKAKELNEAMKALKTEINKKEQIKADSRYVNADSGLQANYNSALNYGSQIIATTQPPELNKDVINRATQTIKTAENNLNGQSKLAEAKSDGNQSIEHLQGLTQSQKDKQHDLINQAQTKQQVDDIVNNSKQLDNSMNQLQQIVNNDNTVKQNSDFINEDSSQQDAYNHAIQAAKDLITAHPTIMDKNQIDQAIENIKQALNDLHGSNKLSEDKKEASEQLQNLNSLTNGQKDTILNHIFSAPTRSQVGEKIASAKQLNNTMKALRDSIADNNEILQSSKYFNEDSEQQNAYNQAVNKAKNIINDQPTPVMANDEIQSVLNEVKQTKDNLHGDQKLANDKTDAQATLNALNYLNQAQRGNLETKVQNSNSRPEVQKVVQLANQLNDAMKKLDDALTGNDAIKQTSNYINEDTSQQVNFDEYTDRGKNIVAEQTNPNMSPTNINTIADKITEAKNDLHGVQKLKQAQQQSINTINQMTGLNQAQKEQLNQEIQQTQTRSEVHQVINKAQALNDSMNTLRQSITDEHEVKQTSNYINETVGNQTAYNNAVDRVKQIINQTSNPTMNPLEVERATSNVKISKDALHGERELNDNKNSKTFAVNHLDNLNQAQKEALTHEIEQATIVSQVNNIYNKAKALNNDMKKLKDIVAQQDNVRQSNNYINEDSTPQNMYNDTINHAQSIIDQVANPTMSHDEIENAINNIKHAINALDGEHKLQQAKENANLLINSLNDLNAPQRDAINRLVNEAQTREKVAEQLQSAQALNDAMKHLRNSIQNQSSVRQESKYINASDAKKEQYNHAVREVENIINEQHPTLDKEIIKQLTDGVNQANNDLNGVELLDADKQNAHQSIPTLMHLNQAQQNALNEKINNAVTRTEVAAIIGQAKLLDHAMENLEESIKDKEQVKQSSNYINEDSDVQETYDNAVDHVTEILNQTVNPTLSIEDIEHAINEVNQAKKQLRGKQKLYQTIDLADKELSKLDDLTSQQSSSISNQIYTAKTRTEVAQAIEKAKSLNHAMKALNKVYKNADKVLDSSRFINEDQPEKKAYQQAINHVDSIIHRQTNPEMDPTVINSITHELETAQNNLHGDQKLAHAQQDAANVINGLIHLNVAQREVMINTNTNATTREKVAKNLDNAQALDKAMETLQQVVAHKNNILNDSKYLNEDSKYQQQYDRVIADAEQLLNQTTNPTLEPYKVDIVKDNVLANEKILFGAEKLSYDKSNANDEIKHMNYLNNAQKQSIKDMISHAALRTEVKQLLQQAKILDEAMKSLEDKTQVVITDTTLPNYTEASEDKKEKVDQTVSHAQAIIDKINGSNVSLDQVRQALEQLTQASENLDGDQRVEEAKVHANQTIDQLTHLNSLQQQTAKESVKNATKLEEIATVSNNAQALNKVMGKLEQFINHADSVENSDNYRQADDDKIIAYDEALEHGQDIQKTNATQNETKQALQQLIYAETSLNGFERLNHARPRALEYIKSLEKINNAQKSALEDKVTQSHDLLELEHIVNEGTNLNDIMGELANAIVNNYAPTKASINYINADNLRKDNFTQAINNARDALNKTQGQNLDFNAIDTFKDDIFKTKDALNGIERLTAAKSKAEKLIDSLKFINKAQFTHANDEIINTNSIAQLSRIVNQAFDLNDAMKSLRDELNNQAFPVQASSNYINSDEDLKQQFDHALSNARKVLAKENGKNLDEKQIQGLKQVIEDTKDALNGIQRLSKAKAKAIQYVQSLSYINDAQRHIAENNIHNSDDLSSLANTLSKASDLDNAMKDLRDTIESNSTSVPNSVNYINADKNLQIEFDEALQQASATSSKTSENPATIEEVLGLSQAIYDTKNALNGEQRLATEKSKDLKLIKGLKDLNKAQLEDVTNKVNSANTLTELSQLTQSTLELNDKMKLLRDKLKTLVNPVKASLNYRNADYNLKRQFNKALKEAKGVLNKNSGTNVNINDIQHLLTQIDNAKDQLNGERRLKEHQQKSEVFIIKELDILNNAQKAAIINQIRASKDIKIINQIVDNAIELNDAMQGLKEHVAQLTATTKDNIEYLNADEDHKLQYDYAINLANNVLDKENGTNKDANIIIGMIQNMDDARALLNGIERLKDAQTKAHNDIKDTLKRQLDEIEHANATSNSKAQAKQMVNEEARKALSNINDATSNDLVNQAKDEGQSAIEHIHADELPKAKLDANQMIDQKVEDINHLISQNPNLSNEEKNKLISQINKLVNGIKNEIQQAINKQQIENATTKLDEVIETTKKLIIAKAEAKQMIKELSQKKRDAINNNTDLTPSQKAHALADIDKTEKDALQHIENSNSIDDINNNKEHAFNTLAHIIIWDTDQQPLVFELPELSLQNALVTSEVVVHRDETISLESIIGAMTLTDELKVNIVSLPNTDKVADHLTAKVKVILADGSYVTVNVPVKVVEKELQIAKKDAIKTIDVLVKQKIKDIDSNNELTSTQREDAKAEIERLKKQAIDKVNHSKSIKDIETVKRTDFEEIDQFDPKRFTLNKAKKDIITDVNTQIQNGFKEIETIKGLTSNEKTQFDKQLTALQKEFLEKVEHAHNLVELNQLQQEFNNRYKHILNQAHLLGEKHIAEHKLGYVVVNKTQQILNNQSASYFIKQWALDRIKQIQLETMNSIRGAHTVQDVHKALLQGIEQILKVNVSIINQSFNDSLHNFNYLHSKFDARLREKDVANHIVQTETFKEVLKGTGVEPGKINKETQQPKLHKNDNDSLFKHLVDNFGKTVGVITLTGLLSSFWLVLAKRRKKEEEEKQSIKNHHKDIRLSDTDKIDPIVITKRKIDKEEQIQNDDKHSIPVAKHKKSKEKQLSEEDIHSIPVVKRKQNSDNKDTKQKKVTSKKKKTPQSTKKVVKTKKRSKK.

FIVAR domains follow at residues 1815 to 1871, 1901 to 1957, 1985 to 2041, 2071 to 2127, 2155 to 2211, 2241 to 2297, 2325 to 2381, 2411 to 2467, 2488 to 2551, 2581 to 2638, 2665 to 2720, 2748 to 2804, 2832 to 2888, 2918 to 2974, 3002 to 3058, 3088 to 3144, 3172 to 3228, 3258 to 3314, 3335 to 3398, 3428 to 3484, 3512 to 3567, 3595 to 3650, 3678 to 3733, 3802 to 3860, 3928 to 3983, 4056 to 4114, 4182 to 4240, 4308 to 4365, and 4433 to 4491; these read ARRR…VNSA, AKEQ…INDA, AYDT…VRDA, AKKR…ITSE, AYNK…VTQA, AKNR…ISSE, AYNK…VEDA, AKEK…ITEN, DTTS…VNNA, ARNR…STEI, AKNQ…IRTN, AKTA…VSDE, AYNQ…VNNA, AKEQ…ISNA, AYNQ…VTAA, AKQQ…ITNE, AYNQ…VAQA, AKNQ…ISDE, DTTE…VNNA, ARLN…ITTE, AKTA…IKTN, IKRQ…VKES, AKNR…IRQN, SMTA…IDQK, AMTQ…LDPA, AMQA…VNQK, SMGT…VDNA, AMHT…INQK, and VMEQ…IEQA. Residues 2495-2507 show a composition bias toward basic and acidic residues; it reads EVRKLSRRGDTNN. The interval 2495 to 2514 is disordered; the sequence is EVRKLSRRGDTNNKKPSSVS. Positions 2925–2938 are enriched in polar residues; that stretch reads AVDQVPSTEGMTQQ. The segment at 2925–2951 is disordered; sequence AVDQVPSTEGMTQQTKDDYNSKQQAAQ. A disordered region spans residues 4522 to 4542; sequence LSGLTNEQKPKENQAVNGAQT. Residues 4559 to 4617 enclose the FIVAR 30 domain; it reads SMQTLRDLVNNQNAIHSTSNYFNEDSTQKNTYDNAIDNGSTYITGQHNPELNKSTIDQT. The segment at 4648–4671 is disordered; the sequence is LGYLNDPQKSGEESLVNGSNTRSE. 14 consecutive FIVAR domains span residues 4685–4743, 4811–4869, 4937–4995, 5063–5115, 5189–5246, 5314–5372, 5440–5498, 5566–5624, 5692–5750, 5818–5875, 5943–6000, 6068–6126, 6194–6252, and 6320–6378; these read AMKQ…IEQK, AMQA…IEQA, AMSN…IEQA, AMEA…VLDK, AMLG…INQL, LMGA…VTTA, AMGE…IDQA, AMKK…ITNA, AMKQ…IADT, DMST…LQDL, AMKA…IKQA, KMEE…INRT, AMQQ…IQAI, and EMGT…IADA. Residues 5699–5712 are compositionally biased toward polar residues; it reads QVNQDDQISNSSPF. Positions 5699–5719 are disordered; sequence QVNQDDQISNSSPFINEDSDK. The interval 6413–6434 is disordered; the sequence is NNSQRQSEHDEINSAPSRTEVS. FIVAR domains lie at 6446 to 6504, 6572 to 6630, 6698 to 6755, 6823 to 6877, 6949 to 7007, 7075 to 7133, 7201 to 7259, 7327 to 7384, 7452 to 7510, 7578 to 7636, 7704 to 7762, 7830 to 7888, 7956 to 8010, 8078 to 8137, 8205 to 8264, 8332 to 8391, 8459 to 8518, and 8587 to 8643; these read AMRQ…IEDA, AMKA…INRA, SMNQ…IDQA, TMKA…ANDE, AMKK…INTI, SMNT…VERA, DMKK…IENA, AMKH…IKQL, AMEN…IEHA, AMKA…INSI, AMET…VDIV, AMKS…VRQA, VMGK…TKQA, IMGE…IDTF, AMKS…IQGL, AMKD…VLGL, KMKL…IQHL, and AMQG…ANII. A helical membrane pass occupies residues 9306 to 9324; sequence TVGVITLTGLLSSFWLVLA. 3 stretches are compositionally biased toward basic and acidic residues: residues 9363-9375, 9386-9395, and 9404-9413; these read DKEEQIQNDDKHS, EKQLSEEDIH, and QNSDNKDTKQ. Residues 9363 to 9439 form a disordered region; sequence DKEEQIQNDD…VVKTKKRSKK (77 aa). Residues 9414–9439 show a composition bias toward basic residues; sequence KKVTSKKKKTPQSTKKVVKTKKRSKK.

It localises to the cell membrane. The polypeptide is Extracellular matrix-binding protein ebh (ebh) (Staphylococcus epidermidis (strain ATCC 35984 / DSM 28319 / BCRC 17069 / CCUG 31568 / BM 3577 / RP62A)).